The sequence spans 1447 residues: MHDAESTVDSLLKEIDNEMEQTKSNITQNGSEDTPHNWKLPLQEIGDDTMEMLVKHNTRSNATENSRGRSPSKMSTISNESLNLGLLRVNSELEESPAAVHQERIKNSVANGALGHANSPKVLNNLKNMAQDIDKLARDEEKPVKLSSSPLKFTLKSTQPLLSYPESPIHRSSIEIETNYDDEDEEEEDAYTCLTQSPQILHSPSRIPITNAVSINKLNLDFTLNPNESDKSLVSDTSVDSTGRELDTKTIPELPFCMSSTPEMTPVDEKCNLPSKLLNTSNNSHSDSRSPTASVEDLNISTNLPGADSSQNNPVTTDADALIENDVVRDLQQNMEHIDDAFDEKKVLDEGCSNEPVTFLGENDTRSIVYSNKGTNANVQEFSQEDSLAHSEPKFKDLNATSDDVWNEDKETDANISTSTKSEESYIADYKVTRQEDWDTKKLHQESEHANEQPAIIPQKDSSEETFTELNNESEFQRNFKDGEEYRIVQHEESLYGQRTKSPEENIINGSEIGVDHGEAAEVNEPLAKTSAEEHDLSSSCEDQSVSEARNKDRIEEKEVETKDENIETEKDESEYHKVEENEEPEHVPLLPPLPRWEEIQFNEPFIDENDTSNDSIDLTRSMKPSDYISIWHIQEEEIKSNSPESIANSQFSQQSSITTASTVDSKKDNGSTSFKFKPRIVSRSRIYNPKSRVSSLNYYDNEDYILSNSEWNALDPMRRNTLISKRIQDNIRTQKGHAPLIRPSIMKLNGEDSGFQNHFLEVEQPQEHENIPLSTHLSEQDITTNVGLDEQKLPTNTQDEAEISIREIESAGDITFNRGDLLSLSFDEELGQDFANFLDALDHDSTSFNHGPDDSSSFQRDSSKKSFNSLWESSYELKPPPSIRKQPIAPDVLQKLLESDTKDDADLEKIREERITEPRTGLGIGMLKTPVKDVSIALAASIKGYEASFSDTDSRPEGMNNSDAITLNMFDDFEEDKMTPSTPVRSISPIKRHVSSPFKVVKAGNKQENNEINIKAEEEIEPMTQQETDGLKQDIPPLLAQTKDNVEAKEETITQLEEPQDVEQEFPDMGTLYLSIKAISTLALYGTKSHRATYAIVFDNGENVVQTPWESLPYDGNIRINKEFELPIDFKGKAETSSASSERDSYKKCVITLKCKYEKPRHELVEIVDKVPVGKSFFGKTKYKFEKKYVQKKPKQDEWDYLFAQDGSFARCEIEINEEFLKNVAFNTSHMHYNMINKWSRIADKIHGSKRLYELPRKAPHKVASLDVEACFLERTSAFEQFPKQFSLVNKIVSKYKLQQNIYKEGYLLQDGGDLKGKIENRFFKLHGSQLSGYHEISRKAKIDINLLKVTKVLRNEDIQADNGGQRNFTDWVLFNECFQLVFDDGERITFNAECSNEEKSDWYNKLQEVVELNVFHQPWVKKYCEKLAEEEKTRTTGHNLKQDFN.

The span at 1-16 (MHDAESTVDSLLKEID) shows a compositional bias: basic and acidic residues. 2 disordered regions span residues 1–38 (MHDA…PHNW) and 57–76 (NTRS…KMST). Serine 10 is subject to Phosphoserine. Composition is skewed to polar residues over residues 22-32 (TKSNITQNGSE) and 59-76 (RSNA…KMST). A phosphoserine mark is found at serine 78, serine 81, serine 91, serine 96, and serine 167. The tract at residues 272–316 (NLPSKLLNTSNNSHSDSRSPTASVEDLNISTNLPGADSSQNNPVT) is disordered. The span at 277–316 (LLNTSNNSHSDSRSPTASVEDLNISTNLPGADSSQNNPVT) shows a compositional bias: polar residues. A Phosphothreonine modification is found at threonine 365. Serine 367 is subject to Phosphoserine. Residues 444–479 (HQESEHANEQPAIIPQKDSSEETFTELNNESEFQRN) are disordered. Phosphoserine is present on serine 511. Residues 529–591 (KTSAEEHDLS…NEEPEHVPLL (63 aa)) are disordered. The span at 538–548 (SSSCEDQSVSE) shows a compositional bias: polar residues. Residues 549–580 (ARNKDRIEEKEVETKDENIETEKDESEYHKVE) are compositionally biased toward basic and acidic residues. Serine 616 carries the post-translational modification Phosphoserine. Residues 648-664 (ANSQFSQQSSITTASTV) are compositionally biased toward polar residues. The tract at residues 648 to 673 (ANSQFSQQSSITTASTVDSKKDNGST) is disordered. Positions 768-879 (EHENIPLSTH…SLWESSYELK (112 aa)) are interaction with IQG1. Residues serine 805 and serine 811 each carry the phosphoserine modification. The region spanning 1302-1413 (NIYKEGYLLQ…WYNKLQEVVE (112 aa)) is the PH domain.

As to quaternary structure, interacts with AXL1, AXL2, IQG1 and SEC3. In terms of processing, phosphorylated by CDC28.

The protein resides in the bud neck. Required for establishment of the axial budding pattern in haploid cells. Cooperates with other bud site selection proteins to recognize a spatial landmark during mitosis and they subsequently become a landmark for downstream polarity establishment factors that coordinate axial budding and cytokinesis. Involved in the septin organization at the bud neck. The polypeptide is Bud site selection protein 4 (BUD4) (Saccharomyces cerevisiae (strain ATCC 204508 / S288c) (Baker's yeast)).